The following is a 219-amino-acid chain: Dynein light chain Tctex-type 4 (219 aa).

A disordered region spans residues 1 to 84 (MAGRPVPAGR…RRPSLGPVPP (84 aa)). Residues 10–20 (RQEEELAKDPG) show a composition bias toward basic and acidic residues. A Phosphoserine modification is found at Ser-64.

This sequence belongs to the dynein light chain Tctex-type family. As to quaternary structure, interacts with ENG/endoglin, TGFBR2 and TGFBR3. Interacts with PPP1CC.

The protein resides in the cell projection. It localises to the cilium. It is found in the flagellum. Its subcellular location is the cytoplasmic vesicle. The protein localises to the secretory vesicle. The protein resides in the acrosome. It localises to the cytoplasm. It is found in the cytoskeleton. Its subcellular location is the cilium axoneme. The protein localises to the nucleus. The protein resides in the microtubule organizing center. The sequence is that of Dynein light chain Tctex-type 4 (DYNLT4) from Sus scrofa (Pig).